Here is a 594-residue protein sequence, read N- to C-terminus: Probable pectinesterase/pectinesterase inhibitor 33 (594 aa).

An N-terminal signal peptide occupies residues 1 to 22 (MLRGIFHICLLASFLLLPFSSA). The interval 28 to 75 (FTGGTDAPPPWDHNVSPPPETAPSPTPTSSPSTTSPPSPGPVAAPSPI) is disordered. Pro residues predominate over residues 34 to 71 (APPPWDHNVSPPPETAPSPTPTSSPSTTSPPSPGPVAA). N77, N170, N213, and N226 each carry an N-linked (GlcNAc...) asparagine glycan. Residues 78–237 (GSVSGDMTWW…SDLIGNCLAV (160 aa)) form a pectinesterase inhibitor 33 region. Residues 280–581 (HLVVAQDRSG…TVGSLIAGGS (302 aa)) form a pectinesterase 33 region. Residues T356 and Q386 each contribute to the substrate site. The Proton donor; for pectinesterase activity role is filled by D409. Residues C423 and C443 are joined by a disulfide bond. D430 acts as the Nucleophile; for pectinesterase activity in catalysis. Residues R498 and W500 each coordinate substrate.

This sequence in the N-terminal section; belongs to the PMEI family. The protein in the C-terminal section; belongs to the pectinesterase family. As to expression, expressed in siliques.

It localises to the secreted. It is found in the cell wall. It carries out the reaction [(1-&gt;4)-alpha-D-galacturonosyl methyl ester](n) + n H2O = [(1-&gt;4)-alpha-D-galacturonosyl](n) + n methanol + n H(+). Its pathway is glycan metabolism; pectin degradation; 2-dehydro-3-deoxy-D-gluconate from pectin: step 1/5. Its function is as follows. Acts in the modification of cell walls via demethylesterification of cell wall pectin. In Arabidopsis thaliana (Mouse-ear cress), this protein is Probable pectinesterase/pectinesterase inhibitor 33 (PME33).